Here is a 453-residue protein sequence, read N- to C-terminus: Trypanin (453 aa).

Positions 1–10 (MPPRTAAERG) are enriched in basic and acidic residues. The disordered stretch occupies residues 1–22 (MPPRTAAERGGRRKSVKAPPPV). Coiled coils occupy residues 60-156 (TITK…EMNV) and 185-377 (SCEA…LVEE).

The protein belongs to the DRC4 family.

The protein localises to the cytoplasm. It localises to the cytoskeleton. The protein resides in the cell projection. It is found in the cilium. Its subcellular location is the flagellum. Cytoskeletal linker that plays a central role in the flagellum cell motility. Required for directional cell motility. Plays a role as part of a dynein regulatory system that regulates flagellar beat in response to signals from the central pair apparatus and radial spokes in procyclic cells. Also plays an essential role in the bloodstream form of the trypanosomes as its silencing is lethal for the circulating form. This Trypanosoma brucei rhodesiense protein is Trypanin.